The primary structure comprises 274 residues: Kit ligand (274 aa).

The N-terminal stretch at 1 to 25 (MKKTQTWIITCIYLQLLLFNPLVKT) is a signal peptide. The Extracellular segment spans residues 26–215 (KGICENRVTD…SNFTGDSNLQ (190 aa)). 2 cysteine pairs are disulfide-bonded: C29/C114 and C68/C164. Residues N90, N97, N145, N196, and N207 are each glycosylated (N-linked (GlcNAc...) asparagine). The helical transmembrane segment at 216–238 (WAAMALPAFFSLVIGFAFGALYW) threads the bilayer. Residues 239–274 (KKKQPNLTRAVENIQINEEDNEISMLQEKEREFQEV) are Cytoplasmic-facing.

It belongs to the SCF family. Homodimer, non-covalently linked. In terms of processing, a soluble form is produced by proteolytic processing of the extracellular domain.

Its subcellular location is the cytoplasm. The protein resides in the cytoskeleton. It is found in the cell membrane. The protein localises to the cell projection. It localises to the lamellipodium. Its subcellular location is the filopodium. The protein resides in the secreted. In terms of biological role, stimulates the proliferation of mast cells. Able to augment the proliferation of both myeloid and lymphoid hematopoietic progenitors in bone marrow culture. Also mediates cell-cell adhesion. Acts synergistically with other cytokines, probably interleukins. This chain is Kit ligand (KITLG), found in Equus caballus (Horse).